The primary structure comprises 600 residues: DNA mismatch repair protein MutL (600 aa).

This sequence belongs to the DNA mismatch repair MutL/HexB family.

Its function is as follows. This protein is involved in the repair of mismatches in DNA. It is required for dam-dependent methyl-directed DNA mismatch repair. May act as a 'molecular matchmaker', a protein that promotes the formation of a stable complex between two or more DNA-binding proteins in an ATP-dependent manner without itself being part of a final effector complex. The protein is DNA mismatch repair protein MutL of Sinorhizobium fredii (strain NBRC 101917 / NGR234).